The sequence spans 236 residues: CD81 antigen (236 aa).

The Cytoplasmic portion of the chain corresponds to 1 to 12; sequence MGVEGCTKCIKY. Residues 13 to 33 form a helical membrane-spanning segment; that stretch reads LLFVFNFVFWLAGGVILGVAL. Topologically, residues 34–63 are extracellular; it reads WLRHDPQTTSLLYLELGNKPAPNTFYVGIY. A helical membrane pass occupies residues 64–84; that stretch reads ILIAVGAVMMFVGFLGCYGAI. Residues 85 to 89 lie on the Cytoplasmic side of the membrane; it reads QESQC. Residues 90–112 form a helical membrane-spanning segment; sequence LLGTFFTCLVILFACEVAAGIWG. Topologically, residues 113–201 are extracellular; that stretch reads FVNKDQIAKD…QKIDELFSGK (89 aa). 2 disulfides stabilise this stretch: Cys156–Cys190 and Cys157–Cys175. Residues 202–224 traverse the membrane as a helical segment; sequence LYLIGIAAIVVAVIMIFEMILSM. Glu219 provides a ligand contact to cholesterol. The Cytoplasmic segment spans residues 225–236; that stretch reads VLCCGIRNSSVY.

This sequence belongs to the tetraspanin (TM4SF) family. As to quaternary structure, homodimer. Part of a complex composed of CD19, CR2/CD21, CD81 and IFITM1/CD225 in the membrane of mature B cells. Interacts (via the second extracellular domain) with CD19; this interaction is initiated early during biosynthesis in the ER and enables trafficking of only properly folded CD19. Part of a complex that includes MHC class II/HLA-DR molecules and IFITM1. Interacts with IFITM1. Interacts with IFITM2 and IFITM3. Part of integrin-tetraspanin complex composed of CD9, CD81, beta-1 and beta-2 integrins in the membrane of monocyte/macrophages. Interacts (via the second extracellular domain) with integrin ITGAV:ITGB3. Interacts with CD247/CD3 zeta, ICAM1 and CD9 at the immune synapse on T cell membrane. Part of a GPCR-tetraspanin complex consisting at least of ADGRG1, CD81, possibly CD9, and GNA11 in which CD81 enhances the association of ADGRG1 with GNA11. Part of a complex composed of CD9, CD81, PTGFRN and IGSF8. Interacts directly with IGSF8. Interacts with CD53 and SCIMP. Interacts with SAMHD1 (via its C-terminus). Interacts with glypican GPC3 and with the transcriptional repressor HHEX; binding to GPC3 decreases the availability of free CD81 for binding to HHEX, resulting in nuclear translocation of HHEX and transcriptional repression. Interacts with CLDN1. Interacts with CLDN6 and CLDN9. Post-translationally, not glycosylated. Likely constitutively palmitoylated at low levels. Protein palmitoylation is up-regulated upon coligation of BCR and CD9-C2R-CD81 complexes in lipid rafts. Expressed in oocytes (at protein level). Highly expressed in granulosa cells. Expressed in skeletal muscle mainly in endothelial cells of endomysial capillaries, in satellite cells and myoblasts (at protein level). Expressed in hepatocytes (at protein level).

It is found in the cell membrane. Its subcellular location is the basolateral cell membrane. In terms of biological role, structural component of specialized membrane microdomains known as tetraspanin-enriched microdomains (TERMs), which act as platforms for receptor clustering and signaling. Essential for trafficking and compartmentalization of CD19 receptor on the cell surface of activated B cells. Upon initial encounter with a microbial pathogen, enables the assembly of CD19-CR2 and B cell receptor complexes at signaling TERMs, lowering the threshold dose of antigen required to trigger B cell clonal expansion and humoral immune response. In T cells, associates with CD4 or CD8 coreceptors and defines the maturation state of antigen-induced synapses with B cells. Facilitates localization of CD3 in these immune synapses, required for costimulation and sustained activation of T cells, preferentially triggering T helper type 2 immune response. Can act both as positive and negative regulator of homotypic or heterotypic cell-cell fusion processes. In myoblasts, associates with another tetraspanin CD9 in complex with PTGFRN and inhibits myotube fusion during muscle regeneration. In macrophages, associates with CD9 and beta-1 and beta-2 integrins, and prevents macrophage fusion into multinucleated giant cells specialized in ingesting complement-opsonized large particles. Also prevents the fusion between mononuclear cell progenitors into osteoclasts in charge of bone resorption. Positively regulates sperm-egg fusion and may be involved in the acrosome reaction. Regulates protein trafficking in intracellular compartments. In T cells, associates with dNTPase SAMHD1 and defines its subcellular location, enabling its degradation by the proteasome and thereby controlling intracellular dNTP levels. Also regulates integrin-dependent migration of macrophages, particularly relevant for inflammatory response in the lung. Its function is as follows. (Microbial infection) Specifically required for Plasmodium yoelii infectivity of hepatocytes, controlling sporozoite entry in hepatocytes via the parasitophorous vacuole and subsequent parasite differentiation to exoerythrocytic forms. The sequence is that of CD81 antigen from Mus musculus (Mouse).